Here is a 22-residue protein sequence, read N- to C-terminus: Hemocyanin subunit 4 (22 aa).

The protein belongs to the tyrosinase family. Hemocyanin subfamily. Hemolymph.

Its subcellular location is the secreted. The protein localises to the extracellular space. Functionally, hemocyanins are copper-containing oxygen carriers occurring freely dissolved in the hemolymph of many mollusks and arthropods. In Homarus americanus (American lobster), this protein is Hemocyanin subunit 4.